We begin with the raw amino-acid sequence, 962 residues long: Translation initiation factor IF-2 (962 aa).

The tract at residues 101–366 (AAQTQAAPVR…KKGKKLKLEP (266 aa)) is disordered. A compositionally biased stretch (basic and acidic residues) spans 117–141 (DAAKARAEAATRAEARAKAEAEAAK). The segment covering 145–157 (AKAGNKAKPAAQK) has biased composition (low complexity). Basic and acidic residues predominate over residues 173 to 216 (KPAEESKAEKAQADKMPSKKPAEPKEKAAKPKHERNGKGKDAKK). Low complexity predominate over residues 219 to 234 (KPAAPAVPQPVVSAEE). A compositionally biased stretch (basic and acidic residues) spans 235–269 (QAQRDEEARRAAALRAHQEALLKEKQERQARREAM). Over residues 270–283 (KQQAEQQAKAAQEA) the composition is skewed to low complexity. A compositionally biased stretch (basic and acidic residues) spans 338-354 (GGRDRNNARNGDDERVR). Residues 462–631 (PRPPVVTVMG…LLEAEVLELT (170 aa)) enclose the tr-type G domain. The interval 471 to 478 (GHVDHGKT) is G1. A GTP-binding site is contributed by 471-478 (GHVDHGKT). Residues 496–500 (GITQH) are G2. The segment at 517-520 (DTPG) is G3. Residues 517-521 (DTPGH) and 571-574 (NKID) each bind GTP. Residues 571–574 (NKID) are G4. Positions 607 to 609 (SAK) are G5.

This sequence belongs to the TRAFAC class translation factor GTPase superfamily. Classic translation factor GTPase family. IF-2 subfamily.

The protein resides in the cytoplasm. In terms of biological role, one of the essential components for the initiation of protein synthesis. Protects formylmethionyl-tRNA from spontaneous hydrolysis and promotes its binding to the 30S ribosomal subunits. Also involved in the hydrolysis of GTP during the formation of the 70S ribosomal complex. This is Translation initiation factor IF-2 from Neisseria meningitidis serogroup A / serotype 4A (strain DSM 15465 / Z2491).